The primary structure comprises 90 residues: U7-theraphotoxin-Hhn1k (90 aa).

The signal sequence occupies residues 1–19; it reads MKTAIFTVVLALAVFAVLS. The propeptide occupies 20–50; sequence FGWEANEKALSEEFTELIHEKEAASETEARE. 2 disulfide bridges follow: Cys-51–Cys-65 and Cys-58–Cys-70.

This sequence belongs to the neurotoxin 10 (Hwtx-1) family. 13 (Hntx-13) subfamily. In terms of tissue distribution, expressed by the venom gland.

The protein localises to the secreted. Its function is as follows. Ion channel inhibitor. This is U7-theraphotoxin-Hhn1k from Cyriopagopus hainanus (Chinese bird spider).